The primary structure comprises 171 residues: Small ribosomal subunit protein bS16 (171 aa).

Residues 114–171 (EGGPTTEAAKPKKKAATSGAKKAAKAAEPEAAASEAAEPEAAAAPAEGGEQAESSAES) are disordered. Residues 142 to 171 (PEAAASEAAEPEAAAAPAEGGEQAESSAES) show a composition bias toward low complexity.

The protein belongs to the bacterial ribosomal protein bS16 family.

The chain is Small ribosomal subunit protein bS16 from Mycolicibacterium paratuberculosis (strain ATCC BAA-968 / K-10) (Mycobacterium paratuberculosis).